Reading from the N-terminus, the 261-residue chain is Indole-3-glycerol phosphate synthase (261 aa).

It belongs to the TrpC family.

It catalyses the reaction 1-(2-carboxyphenylamino)-1-deoxy-D-ribulose 5-phosphate + H(+) = (1S,2R)-1-C-(indol-3-yl)glycerol 3-phosphate + CO2 + H2O. Its pathway is amino-acid biosynthesis; L-tryptophan biosynthesis; L-tryptophan from chorismate: step 4/5. This chain is Indole-3-glycerol phosphate synthase, found in Oceanobacillus iheyensis (strain DSM 14371 / CIP 107618 / JCM 11309 / KCTC 3954 / HTE831).